Consider the following 919-residue polypeptide: Plasma membrane ATPase 1 (919 aa).

Positions 1-16 (MADNAGEYHDAEKHAP) are enriched in basic and acidic residues. The tract at residues 1-73 (MADNAGEYHD…APAAGEAKAV (73 aa)) is disordered. Residues 1–113 (MADNAGEYHD…KEELENPFLK (113 aa)) lie on the Cytoplasmic side of the membrane. Positions 34 to 63 (QDDEPDDDIDALIEELFSEDVQEEQEDNDD) are enriched in acidic residues. Serine 89 is modified (phosphoserine). A helical membrane pass occupies residues 114–134 (FIMFFVGPIQFVMEMAAALAA). At 135–138 (GLRD) the chain is on the extracellular side. The chain crosses the membrane as a helical span at residues 139–158 (WVDFGVICALLMLNAVVGFV). At 159-289 (QEYQAGSIVD…GTGHFTEVLN (131 aa)) the chain is on the cytoplasmic side. The helical transmembrane segment at 290 to 311 (GIGTILLVLVLLTLFCIYTAAF) threads the bilayer. At 312–322 (YRSVRLARLLE) the chain is on the extracellular side. The chain crosses the membrane as a helical span at residues 323–345 (YTLAITIIGVPVGLPAVVTTTMA). Over 346–717 (VGAAYLAEKQ…LIIRNQLLNL (372 aa)) the chain is Cytoplasmic. The active-site 4-aspartylphosphate intermediate is aspartate 376. Position 494 is a phosphoserine (serine 494). Mg(2+)-binding residues include aspartate 632 and aspartate 636. A helical membrane pass occupies residues 718 to 736 (ELVVFIAIFADVATLAIAY). Over 737 to 752 (DNAPYSMKPVKWNLPR) the chain is Extracellular. The chain crosses the membrane as a helical span at residues 753-772 (LWGLSTVIGIVLAIGTWITN). The Cytoplasmic segment spans residues 773 to 824 (TTMIAQGQNRGIVQNFGVQDEVLFLEISLTENWLIFVTRCNGPFWSSIPSWQ). The chain crosses the membrane as a helical span at residues 825–845 (LSGAVLAVDILATMFCIFGWF). Residues 846–858 (KGGHQTSIVAVLR) are Extracellular-facing. A helical membrane pass occupies residues 859–875 (IWMYSFGIFCIMAGTYY). Over 876–919 (ILSESAGFDRMMNGKPKESRNQRSIEDLVVALQRTSTRHEKGDA) the chain is Cytoplasmic. A Phosphoserine modification is found at serine 899.

This sequence belongs to the cation transport ATPase (P-type) (TC 3.A.3) family. Type IIIA subfamily.

The protein localises to the cell membrane. It carries out the reaction ATP + H2O + H(+)(in) = ADP + phosphate + 2 H(+)(out). Functionally, the plasma membrane ATPase of plants and fungi is a hydrogen ion pump. The proton gradient it generates drives the active transport of nutrients by H(+)-symport. The resulting external acidification and/or internal alkinization may mediate growth responses. This Schizosaccharomyces pombe (strain 972 / ATCC 24843) (Fission yeast) protein is Plasma membrane ATPase 1 (pma1).